The chain runs to 275 residues: NAD(P)H-hydrate epimerase (275 aa).

The YjeF N-terminal domain occupies 49–258 (AIKIDQELFS…ALAAKYELNL (210 aa)). 102 to 106 (NNGGD) contacts (6S)-NADPHX. The K(+) site is built by Asn103 and Asp167. Residues 171–177 (GFSFKPP) and Asp200 each bind (6S)-NADPHX. Ser203 lines the K(+) pocket.

The protein belongs to the NnrE/AIBP family. K(+) serves as cofactor.

The enzyme catalyses (6R)-NADHX = (6S)-NADHX. The catalysed reaction is (6R)-NADPHX = (6S)-NADPHX. Its function is as follows. Catalyzes the epimerization of the S- and R-forms of NAD(P)HX, a damaged form of NAD(P)H that is a result of enzymatic or heat-dependent hydration. This is a prerequisite for the S-specific NAD(P)H-hydrate dehydratase to allow the repair of both epimers of NAD(P)HX. The sequence is that of NAD(P)H-hydrate epimerase from Ixodes scapularis (Black-legged tick).